The chain runs to 132 residues: Small ribosomal subunit protein uS9 (132 aa).

The protein belongs to the universal ribosomal protein uS9 family.

This is Small ribosomal subunit protein uS9 (rps9) from Halobacterium salinarum (strain ATCC 700922 / JCM 11081 / NRC-1) (Halobacterium halobium).